A 265-amino-acid polypeptide reads, in one-letter code: tRNA(His) guanylyltransferase (265 aa).

Asp29, Gly30, and Asp76 together coordinate Mg(2+). Residues 29–34 and 75–76 each bind GTP; these read DGKGFH and SD.

This sequence belongs to the tRNA(His) guanylyltransferase family. Mg(2+) serves as cofactor.

The catalysed reaction is a 5'-end ribonucleotide-tRNA(His) + GTP + ATP + H2O = a 5'-end phospho-guanosine-ribonucleotide-tRNA(His) + AMP + 2 diphosphate + H(+). Functionally, adds a GMP to the 5'-end of tRNA(His) after transcription and RNase P cleavage. The protein is tRNA(His) guanylyltransferase (THG1) of Debaryomyces hansenii (strain ATCC 36239 / CBS 767 / BCRC 21394 / JCM 1990 / NBRC 0083 / IGC 2968) (Yeast).